A 263-amino-acid polypeptide reads, in one-letter code: Hydroxyacylglutathione hydrolase (263 aa).

Positions 60, 62, 64, 65, 120, 137, and 175 each coordinate Zn(2+).

This sequence belongs to the metallo-beta-lactamase superfamily. Glyoxalase II family. In terms of assembly, monomer. Zn(2+) serves as cofactor.

It catalyses the reaction an S-(2-hydroxyacyl)glutathione + H2O = a 2-hydroxy carboxylate + glutathione + H(+). The protein operates within secondary metabolite metabolism; methylglyoxal degradation; (R)-lactate from methylglyoxal: step 2/2. In terms of biological role, thiolesterase that catalyzes the hydrolysis of S-D-lactoyl-glutathione to form glutathione and D-lactic acid. This is Hydroxyacylglutathione hydrolase from Shewanella pealeana (strain ATCC 700345 / ANG-SQ1).